The following is a 325-amino-acid chain: uncharacterized protein (325 aa).

This is an uncharacterized protein from Escherichia coli (Bacteriophage T4).